The following is a 379-amino-acid chain: F420-dependent formate dehydrogenase subunit beta (379 aa).

4Fe-4S ferredoxin-type domains lie at 271 to 301 (EKWK…CSLE) and 321 to 351 (IRLS…YIFH). 8 residues coordinate [4Fe-4S] cluster: Cys280, Cys283, Cys286, Cys290, Cys330, Cys333, Cys336, and Cys340.

Belongs to the FrhB family. Dimer of an alpha (FdhA) and a beta (FdhB) subunit. [4Fe-4S] cluster serves as cofactor. It depends on FAD as a cofactor. The cofactor is Zn(2+).

It catalyses the reaction oxidized coenzyme F420-(gamma-L-Glu)(n) + formate + 2 H(+) = reduced coenzyme F420-(gamma-L-Glu)(n) + CO2. In terms of biological role, catalyzes the oxidation of formate to carbon dioxide, with coenzyme F420 as the electron acceptor. This chain is F420-dependent formate dehydrogenase subunit beta (fdhB), found in Methanocaldococcus jannaschii (strain ATCC 43067 / DSM 2661 / JAL-1 / JCM 10045 / NBRC 100440) (Methanococcus jannaschii).